The chain runs to 520 residues: Tetratricopeptide repeat protein 6 (520 aa).

TPR repeat units lie at residues 57–90 (MTMC…ISHS), 101–138 (ADCL…DKNS), 139–172 (YTAF…DATE), 176–209 (LNTF…SRTN), 210–243 (GSLC…NPCF), 245–280 (DAYV…NPAY), 281–314 (IKAR…DPKN), 320–347 (GRAV…ISTT), 348–381 (AEFL…NPKY), 382–415 (SLAY…DPEN), 416–449 (EYVL…CPFW), 450–483 (AAVY…KPND), and 484–517 (ALVY…EDYA).

The sequence is that of Tetratricopeptide repeat protein 6 from Homo sapiens (Human).